The sequence spans 59 residues: Cecropin-C type 2 (59 aa).

The signal sequence occupies residues 1–23 (MNFAKVFVLVAMAVLLLVGQSEA).

It belongs to the cecropin family.

The protein resides in the secreted. Cecropins have lytic and antibacterial activity against several Gram-positive and Gram-negative bacteria. The protein is Cecropin-C type 2 (CECC2) of Aedes albopictus (Asian tiger mosquito).